The sequence spans 200 residues: Large ribosomal subunit protein uL4 (200 aa).

The segment at 38–68 is disordered; that stretch reads GRQGSKQQKTRSDVRGGGKRPWRQKGTGRAR. A compositionally biased stretch (basic residues) spans 54 to 65; sequence GGKRPWRQKGTG.

The protein belongs to the universal ribosomal protein uL4 family. As to quaternary structure, part of the 50S ribosomal subunit.

In terms of biological role, one of the primary rRNA binding proteins, this protein initially binds near the 5'-end of the 23S rRNA. It is important during the early stages of 50S assembly. It makes multiple contacts with different domains of the 23S rRNA in the assembled 50S subunit and ribosome. Forms part of the polypeptide exit tunnel. In Pseudomonas fluorescens (strain Pf0-1), this protein is Large ribosomal subunit protein uL4.